Consider the following 106-residue polypeptide: Large ribosomal subunit protein eL42 (106 aa).

The protein belongs to the eukaryotic ribosomal protein eL42 family. Component of the large ribosomal subunit.

Its subcellular location is the cytoplasm. Its function is as follows. Component of the large ribosomal subunit. The ribosome is a large ribonucleoprotein complex responsible for the synthesis of proteins in the cell. The polypeptide is Large ribosomal subunit protein eL42 (RPL36A) (Papio anubis (Olive baboon)).